The chain runs to 284 residues: 4-diphosphocytidyl-2-C-methyl-D-erythritol kinase (284 aa).

Residue lysine 14 is part of the active site. Residue 98 to 108 participates in ATP binding; it reads PMGGGLGGGSS. The active site involves aspartate 140.

It belongs to the GHMP kinase family. IspE subfamily.

The enzyme catalyses 4-CDP-2-C-methyl-D-erythritol + ATP = 4-CDP-2-C-methyl-D-erythritol 2-phosphate + ADP + H(+). Its pathway is isoprenoid biosynthesis; isopentenyl diphosphate biosynthesis via DXP pathway; isopentenyl diphosphate from 1-deoxy-D-xylulose 5-phosphate: step 3/6. Its function is as follows. Catalyzes the phosphorylation of the position 2 hydroxy group of 4-diphosphocytidyl-2C-methyl-D-erythritol. The polypeptide is 4-diphosphocytidyl-2-C-methyl-D-erythritol kinase (Shewanella sp. (strain MR-7)).